Consider the following 386-residue polypeptide: Diaminopimelate decarboxylase (386 aa).

Position 46 is an N6-(pyridoxal phosphate)lysine (Lys-46). Pyridoxal 5'-phosphate contacts are provided by residues Gly-214 and 246-249; that span reads EIGR. Positions 249, 285, and 289 each coordinate substrate. Residue Cys-314 is the Proton donor of the active site. Positions 315 and 343 each coordinate substrate. Tyr-343 is a binding site for pyridoxal 5'-phosphate.

It belongs to the Orn/Lys/Arg decarboxylase class-II family. LysA subfamily. In terms of assembly, homodimer. It depends on pyridoxal 5'-phosphate as a cofactor.

It carries out the reaction meso-2,6-diaminopimelate + H(+) = L-lysine + CO2. The protein operates within amino-acid biosynthesis; L-lysine biosynthesis via DAP pathway; L-lysine from DL-2,6-diaminopimelate: step 1/1. Specifically catalyzes the decarboxylation of meso-diaminopimelate (meso-DAP) to L-lysine. In Thermotoga maritima (strain ATCC 43589 / DSM 3109 / JCM 10099 / NBRC 100826 / MSB8), this protein is Diaminopimelate decarboxylase.